The primary structure comprises 57 residues: Preprotein translocase subunit SecG (57 aa).

Topologically, residues 1-31 (MAKKKGEGPGLMSSAGLMRYFESEETSIKLD) are cytoplasmic. Residues 32–53 (PKMVIGAGIASGVAIMALNITF) form a helical membrane-spanning segment. The Extracellular portion of the chain corresponds to 54–57 (GLWP).

This sequence belongs to the SEC61-beta family. Component of the protein translocase complex. Heterotrimer consisting of alpha (SecY), beta (SecG) and gamma (SecE) subunits. Can form oligomers of the heterotrimer.

The protein localises to the cell membrane. Involved in protein export. The function of the beta subunit is unknown, but it may be involved in stabilization of the trimeric complex. This is Preprotein translocase subunit SecG from Methanothrix thermoacetophila (strain DSM 6194 / JCM 14653 / NBRC 101360 / PT) (Methanosaeta thermophila).